A 324-amino-acid polypeptide reads, in one-letter code: Cyclin-dependent kinase C-3 (324 aa).

The 294-residue stretch at 27-320 (FRRIRKIGEG…AHDALCAAYF (294 aa)) folds into the Protein kinase domain. ATP-binding positions include 33–41 (IGEGTYGEV) and Lys56. Thr37 carries the phosphothreonine modification. Tyr38 bears the Phosphotyrosine mark. Asp160 serves as the catalytic Proton acceptor. Thr193 is modified (phosphothreonine).

The protein belongs to the protein kinase superfamily. CMGC Ser/Thr protein kinase family. CDC2/CDKX subfamily.

The enzyme catalyses L-seryl-[protein] + ATP = O-phospho-L-seryl-[protein] + ADP + H(+). It catalyses the reaction L-threonyl-[protein] + ATP = O-phospho-L-threonyl-[protein] + ADP + H(+). The catalysed reaction is [DNA-directed RNA polymerase] + ATP = phospho-[DNA-directed RNA polymerase] + ADP + H(+). In Oryza sativa subsp. japonica (Rice), this protein is Cyclin-dependent kinase C-3 (CDKC-1).